Here is an 882-residue protein sequence, read N- to C-terminus: Alanine--tRNA ligase (882 aa).

Zn(2+)-binding residues include His-568, His-572, Cys-670, and His-674.

It belongs to the class-II aminoacyl-tRNA synthetase family. The cofactor is Zn(2+).

It is found in the cytoplasm. The enzyme catalyses tRNA(Ala) + L-alanine + ATP = L-alanyl-tRNA(Ala) + AMP + diphosphate. Its function is as follows. Catalyzes the attachment of alanine to tRNA(Ala) in a two-step reaction: alanine is first activated by ATP to form Ala-AMP and then transferred to the acceptor end of tRNA(Ala). Also edits incorrectly charged Ser-tRNA(Ala) and Gly-tRNA(Ala) via its editing domain. The chain is Alanine--tRNA ligase from Lactobacillus gasseri (strain ATCC 33323 / DSM 20243 / BCRC 14619 / CIP 102991 / JCM 1131 / KCTC 3163 / NCIMB 11718 / NCTC 13722 / AM63).